Reading from the N-terminus, the 105-residue chain is Large ribosomal subunit protein bL21 (105 aa).

Belongs to the bacterial ribosomal protein bL21 family. Part of the 50S ribosomal subunit. Contacts protein L20.

Functionally, this protein binds to 23S rRNA in the presence of protein L20. This chain is Large ribosomal subunit protein bL21, found in Frankia casuarinae (strain DSM 45818 / CECT 9043 / HFP020203 / CcI3).